A 289-amino-acid chain; its full sequence is CCR4-associated factor 16 (289 aa).

An ABC transporter domain is found at 7 to 249 (IEVRNLTYKF…SEVVNAKVNG (243 aa)). An ATP-binding site is contributed by 41–48 (GANGAGKS).

The protein belongs to the ABC transporter superfamily. Interacts with CCR4 and SSN2.

The protein resides in the cytoplasm. It is found in the nucleus. The protein is CCR4-associated factor 16 (CAF16) of Saccharomyces cerevisiae (strain ATCC 204508 / S288c) (Baker's yeast).